We begin with the raw amino-acid sequence, 313 residues long: MVSYASDVKKELTSLPVHPEHAKAELAAFLRMNGVLSLHDHQFSLDITTENPAIARRIFSLIKTAYGIEPLLIVSKKMKLKKNYQYLVRLQKQVHEILTDLEIFDSNNGLITGIPEKIMSSEQRAMSYLRGAFLASGSVNNPETSRYHLEIYSLYEDHNQDLLKLMNNFFYLNAKETRRRSGYIVYLKEAEKIGDFLHIVGAVNAMLAFEDLRIMRDMRNSVNRLVNCDTANLKKTANAAAKQVEDIQLIEEKFGLENLPEKLTVLARFRLTHPELSLKEVAAQVPDGPISKSGVNHRFQKIREIAKQLKEEN.

Positions Ser277–Glu311 form a DNA-binding region, H-T-H motif.

This sequence belongs to the WhiA family.

Its function is as follows. Involved in cell division and chromosome segregation. The polypeptide is Probable cell division protein WhiA (Lactobacillus johnsonii (strain CNCM I-12250 / La1 / NCC 533)).